Reading from the N-terminus, the 223-residue chain is Putative oxidoreductase MT1904 (223 aa).

4-28 is a binding site for NADP(+); it reads LVTGGDTDLGRTMAEGFRNDGHKVT. Residue serine 128 coordinates substrate.

This sequence belongs to the short-chain dehydrogenases/reductases (SDR) family.

This is Putative oxidoreductase MT1904 from Mycobacterium tuberculosis (strain CDC 1551 / Oshkosh).